The primary structure comprises 142 residues: Transcriptional regulator MraZ (142 aa).

SpoVT-AbrB domains follow at residues 5 to 47 (NYQH…TNQE) and 76 to 119 (SLTV…DINA).

Belongs to the MraZ family. Forms oligomers.

It is found in the cytoplasm. The protein localises to the nucleoid. The chain is Transcriptional regulator MraZ from Mycoplasmoides gallisepticum (strain R(low / passage 15 / clone 2)) (Mycoplasma gallisepticum).